Consider the following 123-residue polypeptide: Holo-[acyl-carrier-protein] synthase (123 aa).

Mg(2+) is bound by residues D8 and E55.

Belongs to the P-Pant transferase superfamily. AcpS family. Requires Mg(2+) as cofactor.

It localises to the cytoplasm. It catalyses the reaction apo-[ACP] + CoA = holo-[ACP] + adenosine 3',5'-bisphosphate + H(+). Transfers the 4'-phosphopantetheine moiety from coenzyme A to a Ser of acyl-carrier-protein. The polypeptide is Holo-[acyl-carrier-protein] synthase (Caldicellulosiruptor saccharolyticus (strain ATCC 43494 / DSM 8903 / Tp8T 6331)).